The primary structure comprises 345 residues: Flotillin-like protein FloA 1 (345 aa).

Residues 26-46 (LLLLVGVFLALFFAAVLGFFF) traverse the membrane as a helical segment.

It belongs to the flotillin-like FloA family. Homooligomerizes.

Its subcellular location is the cell membrane. It is found in the membrane raft. Functionally, found in functional membrane microdomains (FMM) that may be equivalent to eukaryotic membrane rafts. FMMs are highly dynamic and increase in number as cells age. Flotillins are thought to be important factors in membrane fluidity. This is Flotillin-like protein FloA 1 from Rhodopirellula baltica (strain DSM 10527 / NCIMB 13988 / SH1).